Reading from the N-terminus, the 493-residue chain is Catalase A (493 aa).

A disordered region spans residues 1–24; the sequence is MKRKLTGLFGAPVSDRENSMTAGP. Active-site residues include H53 and N126. Residue Y336 coordinates heme.

It belongs to the catalase family. As to quaternary structure, homodimer. The cofactor is heme.

The enzyme catalyses 2 H2O2 = O2 + 2 H2O. Its function is as follows. Decomposes hydrogen peroxide into water and oxygen; serves to protect cells from the toxic effects of hydrogen peroxide. In Staphylococcus xylosus, this protein is Catalase A (katA).